Consider the following 265-residue polypeptide: Tryptophan synthase alpha chain (265 aa).

Active-site proton acceptor residues include Glu48 and Asp59.

It belongs to the TrpA family. Tetramer of two alpha and two beta chains.

The catalysed reaction is (1S,2R)-1-C-(indol-3-yl)glycerol 3-phosphate + L-serine = D-glyceraldehyde 3-phosphate + L-tryptophan + H2O. Its pathway is amino-acid biosynthesis; L-tryptophan biosynthesis; L-tryptophan from chorismate: step 5/5. Functionally, the alpha subunit is responsible for the aldol cleavage of indoleglycerol phosphate to indole and glyceraldehyde 3-phosphate. This Pelagibacter ubique (strain HTCC1062) protein is Tryptophan synthase alpha chain.